Consider the following 424-residue polypeptide: Tryptophan synthase beta chain (424 aa).

The residue at position 108 (Lys-108) is an N6-(pyridoxal phosphate)lysine.

This sequence belongs to the TrpB family. Tetramer of two alpha and two beta chains. The cofactor is pyridoxal 5'-phosphate.

It catalyses the reaction (1S,2R)-1-C-(indol-3-yl)glycerol 3-phosphate + L-serine = D-glyceraldehyde 3-phosphate + L-tryptophan + H2O. Its pathway is amino-acid biosynthesis; L-tryptophan biosynthesis; L-tryptophan from chorismate: step 5/5. Functionally, the beta subunit is responsible for the synthesis of L-tryptophan from indole and L-serine. In Thermoplasma acidophilum (strain ATCC 25905 / DSM 1728 / JCM 9062 / NBRC 15155 / AMRC-C165), this protein is Tryptophan synthase beta chain (trpB).